The chain runs to 748 residues: MTKLSTVDPNASVLNPQRFIQRERENCSIDIDQVNTFLESDPRSRDLTHLIVDQLVNDPIIKADSATYDQTKLTQREVTVKKIARMALYMEQDIKTVRKHFRDTDLLKSLQDFGDTTTPPLTNKDLAIFDKRLSLVANMDPQLSTRIGVHLGLFGNCIKGNGTDEQIKYWLQTRGAILIKGIYGCFAMTELGHGSNVAQLQTTATYDQESDTFIINTPDLAATKWWIGGAAHSATHTACYARLLVNGKDYGVKTFVVPLRDPSSLQLMPGIAIGDIGAKMGRDGIDNGWIQFRNVVIPREFMLSRFTKVHRNPGATPTVEVDPQLDQISGYSALLSGRVNMVMDSFRFGSKFATIATRYAVGRQQFADKPGQPEKQLIDYPLHQYRVLPQIVIPYIISPAAFSLLNFYYSTLDELYAASSKNDKRALVVVSQKLKNLFIDSASLKATNTWLVAQLIDELRQTCGGHGYSGYNAFGKGYNDWVVQCTWEGDNNILSLTSAKSILKKFVDSATKGKYNKELDKRSFRYLDPQFIRKVFTSSSENKLDDLYDYTNIWAVALLKLLRHIAKQVDSTKDLDGASKLLVLVSKFHALYVMLNTYYEKLNSPTDSYVTCPKTKEQLWNVYKLFSLYFIDKHAGEFQQFKILSPDQISQVVQPRLLKLLPEIRKECISLTDSFKWPDGMLNAPIGYYDGDIYHNYFNEVVKNNPVEKDGAGIPPYHELLANMLTRGDEFARLGGANNAEILSKLTK.

It belongs to the acyl-CoA oxidase family. The cofactor is FAD.

The protein localises to the peroxisome. It catalyses the reaction a 2,3-saturated acyl-CoA + O2 = a (2E)-enoyl-CoA + H2O2. It functions in the pathway lipid metabolism; peroxisomal fatty acid beta-oxidation. The polypeptide is Acyl-coenzyme A oxidase (POX1) (Candida glabrata (strain ATCC 2001 / BCRC 20586 / JCM 3761 / NBRC 0622 / NRRL Y-65 / CBS 138) (Yeast)).